We begin with the raw amino-acid sequence, 1822 residues long: Signal-induced proliferation-associated 1-like protein 1 (1822 aa).

Disordered regions lie at residues 1 to 30 (MTSL…PKVH) and 47 to 125 (GSSV…VSLN). The segment covering 84 to 94 (PPRKENVKESS) has biased composition (basic and acidic residues). The span at 95–125 (RSSQEIETSSCLESLSSKGSPVSQGSSVSLN) shows a compositional bias: low complexity. Phosphoserine is present on residues serine 162, serine 187, serine 193, serine 208, serine 255, and serine 288. The disordered stretch occupies residues 277–297 (EREKPLKRRSKSETGDSSIFR). Residues 638–855 (FMKLDEQGLN…RTRQEYLKDL (218 aa)) enclose the Rap-GAP domain. The 77-residue stretch at 992–1068 (EMTLRRNGLG…VKVVIIPPHD (77 aa)) folds into the PDZ domain. Phosphoserine occurs at positions 1117, 1126, 1155, 1166, 1188, 1209, and 1220. The disordered stretch occupies residues 1134–1165 (AGKGDGKMPLPERAANIPRSISSDGRPLERRL). Positions 1183-1252 (SQCRNSPSNL…WQRSEDSLAD (70 aa)) are disordered. Low complexity predominate over residues 1188–1198 (SPSNLSSSSET). The segment covering 1225–1244 (DRQNTQSDIGGSGKSTPSWQ) has biased composition (polar residues). Phosphoserine occurs at positions 1273 and 1288. Residues 1286-1324 (HLSPNKQGHSDSHYSSHSSSNTLSSNASSAHSDEKWYDG) form a disordered region. The segment covering 1300–1315 (SSHSSSNTLSSNASSA) has biased composition (low complexity). Phosphoserine; by PLK2 is present on serine 1344. At threonine 1348 the chain carries Phosphothreonine; by PLK2. Residues 1358–1367 (TASLGASTSS) are compositionally biased toward low complexity. Residues 1358–1382 (TASLGASTSSPRSGPGKEKVAPLWH) form a disordered region. Serine 1367 carries the phosphoserine; by CDK5 modification. Position 1384 is a phosphoserine (serine 1384). Residues 1395–1407 (LETEGHGMDRKTE) are compositionally biased toward basic and acidic residues. The interval 1395–1493 (LETEGHGMDR…SSSGPRTFYP (99 aa)) is disordered. Phosphoserine is present on residues serine 1408, serine 1409, serine 1430, serine 1449, and serine 1451. A compositionally biased stretch (polar residues) spans 1417–1436 (KSQGGSSPLTRENSTFSIND). 2 stretches are compositionally biased toward low complexity: residues 1437–1451 (ATSH…HSAS) and 1471–1486 (SSQL…SSSS). A phosphoserine mark is found at serine 1546 and serine 1567. The tract at residues 1567–1595 (SPTPESQKNFKFHGLSSPQSPFPSTPTSR) is disordered. The residue at position 1569 (threonine 1569) is a Phosphothreonine. A phosphoserine mark is found at serine 1572, serine 1583, serine 1586, serine 1603, and serine 1606. An Asymmetric dimethylarginine modification is found at arginine 1619. Phosphoserine is present on residues serine 1621, serine 1665, serine 1668, serine 1726, serine 1729, serine 1746, serine 1747, and serine 1752. Residues 1753–1813 (PTLASKVDQL…ASDKLKKFTE (61 aa)) are a coiled coil.

In terms of assembly, interacts (via PDZ domain) with EPHA4 (via PDZ motif); controls neuronal morphology through regulation of the RAP1 (RAP1A or RAP1B) and RAP2 (RAP2A, RAP2B or RAP2C) GTPases. Interacts with DLG4, PDLIM5, PDLIM7 and LZTS3. Interacts with the actin cytoskeleton. In terms of processing, ubiquitinated and degraded by the SCF(BTRC) following phosphorylation by PLK2. Post-translationally, phosphorylated at Ser-1367 by CDK5, creating a docking site for the POLO box domains of PLK2. Subsequently, PLK2 binds and phosphorylates SIPA1L1, leading to ubiquitination and degradation by the proteasome. In terms of tissue distribution, detected in brain (at protein level).

The protein resides in the cytoplasm. It is found in the cytoskeleton. Its subcellular location is the postsynaptic density. It localises to the synapse. The protein localises to the synaptosome. Stimulates the GTPase activity of RAP2A. Promotes reorganization of the actin cytoskeleton and recruits DLG4 to F-actin. Contributes to the regulation of dendritic spine morphogenesis. The protein is Signal-induced proliferation-associated 1-like protein 1 (Sipa1l1) of Rattus norvegicus (Rat).